Reading from the N-terminus, the 319-residue chain is Taste receptor type 2 member 14 (319 aa).

At 1–7 (MDGVIKS) the chain is on the extracellular side. The chain crosses the membrane as a helical span at residues 8–28 (IFTFILILEFIIGNLGNSFIV). Residues 29 to 55 (LVNCIDWVKRRKISLVDQLLIALAISR) are Cytoplasmic-facing. A helical membrane pass occupies residues 56–76 (ISLVWSIFGSWCVSVVFPALF). Over 77–87 (ATEKLLRMLTN) the chain is Extracellular. Residues Thr86 and Trp89 each contribute to the cholesterol site. The chain crosses the membrane as a helical span at residues 88-108 (IWTVTNHFSVWLATILGTFYF). Topologically, residues 109–129 (LKIANFSNSIFLYLKWRVKKV) are cytoplasmic. A helical membrane pass occupies residues 130 to 150 (VLVLLLVTLVLLFLNILLINI). Over 151–184 (HINASINGYRGNMTCSSASCNFIRFSSAIALTST) the chain is Extracellular. Asn153 and Asn162 each carry an N-linked (GlcNAc...) asparagine glycan. Residue Ala180 coordinates cholesterol. The helical transmembrane segment at 185-205 (VFILIPFTLSLATFLLLSFSL) threads the bilayer. Residues 206–232 (WKHRKKMQHTVKGYRDVSTKAHRGVMQ) lie on the Cytoplasmic side of the membrane. Residues 233-253 (TVITFLLLYAVFFLTFFVSIW) traverse the membrane as a helical segment. The Extracellular portion of the chain corresponds to 254–261 (ISERLKEN). A helical transmembrane segment spans residues 262-282 (QIIILSEMMGLAYPSGHSCVL). Positions 265 and 268 each coordinate cholesterol. Topologically, residues 283-317 (ILGNKKLRQASLSVLWWLRYRFKDGELSGHKEFRE) are cytoplasmic.

It belongs to the G-protein coupled receptor T2R family. As to quaternary structure, core component of the TAS2R14-GNAI1 complex, consisting of TAS2R14, GNAI1, GNB1 and GNG2; within the complex interacts with GNAI1. Core component of the TAS2R14-GNAT3 complex, consisting of TAS2R14, GNAT3, GNB1 and GNG2; within the complex interacts with GNAT3. Core component of the TAS2R14-GNAS2 complex, consisting of TAS2R14, GNAS2, GNB1 and GNG2; within the complex interacts with GNAS2.

The protein localises to the membrane. The catalysed reaction is Ca(2+)(in) = Ca(2+)(out). It carries out the reaction 3',5'-cyclic AMP(in) = 3',5'-cyclic AMP(out). Basal activity is enhanced by binding to bitter tastants, such as flufenamic acid and aristolochic acid. Regulated by cholesterol in a concentration-dependent manner. Gustducin-linked G-protein coupled receptor that plays a role in the perception of bitterness. The activity of this receptor stimulates GNAT3, activating the gustducin G-protein pathway. Likely plays a role in sensing the chemical composition of the gastrointestinal content and other extra-oral tissues via the inhibitory G-protein pathways. This chain is Taste receptor type 2 member 14 (TAS2R14), found in Papio hamadryas (Hamadryas baboon).